The chain runs to 124 residues: Small ribosomal subunit protein uS12 (124 aa).

Asp-89 carries the post-translational modification 3-methylthioaspartic acid. The tract at residues 102–124 (LDTSGVNNRKHGRSKYGTKRPKS) is disordered. Positions 109–124 (NRKHGRSKYGTKRPKS) are enriched in basic residues.

Belongs to the universal ribosomal protein uS12 family. As to quaternary structure, part of the 30S ribosomal subunit. Contacts proteins S8 and S17. May interact with IF1 in the 30S initiation complex.

With S4 and S5 plays an important role in translational accuracy. Functionally, interacts with and stabilizes bases of the 16S rRNA that are involved in tRNA selection in the A site and with the mRNA backbone. Located at the interface of the 30S and 50S subunits, it traverses the body of the 30S subunit contacting proteins on the other side and probably holding the rRNA structure together. The combined cluster of proteins S8, S12 and S17 appears to hold together the shoulder and platform of the 30S subunit. This is Small ribosomal subunit protein uS12 from Francisella philomiragia subsp. philomiragia (strain ATCC 25017 / CCUG 19701 / FSC 153 / O#319-036).